Reading from the N-terminus, the 203-residue chain is Large ribosomal subunit protein bL25 (203 aa).

It belongs to the bacterial ribosomal protein bL25 family. CTC subfamily. Part of the 50S ribosomal subunit; part of the 5S rRNA/L5/L18/L25 subcomplex. Contacts the 5S rRNA. Binds to the 5S rRNA independently of L5 and L18.

Its function is as follows. This is one of the proteins that binds to the 5S RNA in the ribosome where it forms part of the central protuberance. The protein is Large ribosomal subunit protein bL25 of Dechloromonas aromatica (strain RCB).